The chain runs to 714 residues: Kinesin-like protein KIN-13 (714 aa).

Residues methionine 1–arginine 63 enclose the SAM domain. Positions glutamine 69–glutamine 81 are enriched in polar residues. Disordered regions lie at residues glutamine 69 to glutamine 109 and glycine 122 to glycine 161. Over residues serine 82–valine 92 the composition is skewed to low complexity. A compositionally biased stretch (pro residues) spans proline 151 to arginine 160. In terms of domain architecture, Kinesin motor spans arginine 183–leucine 515. Glycine 273–serine 280 is an ATP binding site.

This sequence belongs to the TRAFAC class myosin-kinesin ATPase superfamily. Kinesin family. KIN-13 subfamily. In terms of assembly, interacts with PLK. Post-translationally, phosphorylated by PLK.

It is found in the cytoplasm. It localises to the cytoskeleton. Its subcellular location is the cell projection. The protein resides in the cilium. The protein localises to the flagellum. It is found in the flagellum basal body. It localises to the flagellum axoneme. Its subcellular location is the spindle. The protein resides in the chromosome. The protein localises to the centromere. It is found in the kinetochore. In terms of biological role, involved in cell cycle. Involved in formation of flagella, regulation of flagellar length, and formation of median bodies during interphase. Regulates flagellar length in all eight distal flagellar tips by promoting disassembly of the microtubules. Disassembles microtubules at the distal flagellar tips in a length-dependent manner in order to maintain different equilibrium lengths of the four flagellar pairs. Regulates interphase and mitotic microtubule dynamics. Regulates microtubule disassembly dynamics of the dual mitotic spindles and the median body. The polypeptide is Kinesin-like protein KIN-13 (Giardia intestinalis (strain ATCC 50803 / WB clone C6) (Giardia lamblia)).